The chain runs to 206 residues: Small ribosomal subunit protein uS4 (206 aa).

An S4 RNA-binding domain is found at 96–156 (GRLDNVVYRM…EKAKKQSRVK (61 aa)).

The protein belongs to the universal ribosomal protein uS4 family. In terms of assembly, part of the 30S ribosomal subunit. Contacts protein S5. The interaction surface between S4 and S5 is involved in control of translational fidelity.

One of the primary rRNA binding proteins, it binds directly to 16S rRNA where it nucleates assembly of the body of the 30S subunit. Its function is as follows. With S5 and S12 plays an important role in translational accuracy. The polypeptide is Small ribosomal subunit protein uS4 (Salmonella typhi).